The sequence spans 549 residues: Protein X92 (549 aa).

The chain is Protein X92 from Trypanosoma brucei brucei.